A 399-amino-acid chain; its full sequence is Phosphate acyltransferase (399 aa).

Belongs to the PlsX family. As to quaternary structure, homodimer. Probably interacts with PlsY.

It is found in the cytoplasm. It carries out the reaction a fatty acyl-[ACP] + phosphate = an acyl phosphate + holo-[ACP]. The protein operates within lipid metabolism; phospholipid metabolism. In terms of biological role, catalyzes the reversible formation of acyl-phosphate (acyl-PO(4)) from acyl-[acyl-carrier-protein] (acyl-ACP). This enzyme utilizes acyl-ACP as fatty acyl donor, but not acyl-CoA. The sequence is that of Phosphate acyltransferase from Rhodobacter capsulatus (Rhodopseudomonas capsulata).